The chain runs to 135 residues: MESSLDRLNFDEFVAKLLIHESKKKNKSFVDHGYIEKEKTKLRPNKVFLNNMVRNVQSHNRGINNRRRDQKRKQLISIKQDNDLNVSSERLSRRIDVPRPTSKKKRLYKETPDLDEPGSREKRVSQKGQLKIEKV.

The disordered stretch occupies residues 56–135 (VQSHNRGINN…QKGQLKIEKV (80 aa)). Positions 64-74 (NNRRRDQKRKQ) are enriched in basic residues. A compositionally biased stretch (polar residues) spans 77–89 (SIKQDNDLNVSSE). The segment covering 108–135 (YKETPDLDEPGSREKRVSQKGQLKIEKV) has biased composition (basic and acidic residues).

This is an uncharacterized protein from Schizosaccharomyces pombe (strain 972 / ATCC 24843) (Fission yeast).